A 240-amino-acid chain; its full sequence is Ribosomal RNA large subunit methyltransferase E (240 aa).

Polar residues predominate over residues 1-13 (MAKKPGSQNTSGR). The tract at residues 1-20 (MAKKPGSQNTSGRGQRDLKV) is disordered. S-adenosyl-L-methionine contacts are provided by G85, W87, D113, D129, and D153. The Proton acceptor role is filled by K193.

This sequence belongs to the class I-like SAM-binding methyltransferase superfamily. RNA methyltransferase RlmE family.

It is found in the cytoplasm. It catalyses the reaction uridine(2552) in 23S rRNA + S-adenosyl-L-methionine = 2'-O-methyluridine(2552) in 23S rRNA + S-adenosyl-L-homocysteine + H(+). Functionally, specifically methylates the uridine in position 2552 of 23S rRNA at the 2'-O position of the ribose in the fully assembled 50S ribosomal subunit. The sequence is that of Ribosomal RNA large subunit methyltransferase E from Roseobacter denitrificans (strain ATCC 33942 / OCh 114) (Erythrobacter sp. (strain OCh 114)).